The chain runs to 248 residues: Probable transcriptional regulatory protein FTM_1203 (248 aa).

This sequence belongs to the TACO1 family.

The protein resides in the cytoplasm. This is Probable transcriptional regulatory protein FTM_1203 from Francisella tularensis subsp. mediasiatica (strain FSC147).